We begin with the raw amino-acid sequence, 428 residues long: Adenylosuccinate synthetase (428 aa).

GTP-binding positions include 12–18 (GDEGKGK) and 40–42 (GHT). D13 functions as the Proton acceptor in the catalytic mechanism. D13 and G40 together coordinate Mg(2+). IMP-binding positions include 13 to 16 (DEGK), 38 to 41 (NAGH), T128, R142, Q223, T238, and R302. Catalysis depends on H41, which acts as the Proton donor. Residue 298–304 (TTTGRPR) coordinates substrate. GTP is bound by residues R304, 330-332 (KLD), and 412-414 (SVG).

The protein belongs to the adenylosuccinate synthetase family. Homodimer. It depends on Mg(2+) as a cofactor.

The protein localises to the cytoplasm. The catalysed reaction is IMP + L-aspartate + GTP = N(6)-(1,2-dicarboxyethyl)-AMP + GDP + phosphate + 2 H(+). It functions in the pathway purine metabolism; AMP biosynthesis via de novo pathway; AMP from IMP: step 1/2. Its function is as follows. Plays an important role in the de novo pathway of purine nucleotide biosynthesis. Catalyzes the first committed step in the biosynthesis of AMP from IMP. In Brevibacillus brevis (strain 47 / JCM 6285 / NBRC 100599), this protein is Adenylosuccinate synthetase.